The sequence spans 32 residues: Potassium channel toxin alpha-KTx 10.2 (32 aa).

3 disulfides stabilise this stretch: C3–C22, C8–C12, and C27–C29. At Y32 the chain carries Tyrosine amide.

Belongs to the short scorpion toxin superfamily. Potassium channel inhibitor family. Alpha-KTx 10 subfamily. Expressed by the venom gland.

The protein localises to the secreted. In terms of biological role, blocks Shaker B potassium-channels (Kv1.1/KCNA1 sub-family). In Centruroides noxius (Mexican scorpion), this protein is Potassium channel toxin alpha-KTx 10.2.